We begin with the raw amino-acid sequence, 162 residues long: Regulator of ribonuclease activity A (162 aa).

Belongs to the RraA family. Homotrimer. Binds to both RNA-binding sites in the C-terminal region of Rne and to RhlB.

Its subcellular location is the cytoplasm. Functionally, globally modulates RNA abundance by binding to RNase E (Rne) and regulating its endonucleolytic activity. Can modulate Rne action in a substrate-dependent manner by altering the composition of the degradosome. Modulates RNA-binding and helicase activities of the degradosome. The protein is Regulator of ribonuclease activity A of Haemophilus influenzae (strain 86-028NP).